The following is a 252-amino-acid chain: Indole-3-glycerol phosphate synthase (252 aa).

This sequence belongs to the TrpC family.

The catalysed reaction is 1-(2-carboxyphenylamino)-1-deoxy-D-ribulose 5-phosphate + H(+) = (1S,2R)-1-C-(indol-3-yl)glycerol 3-phosphate + CO2 + H2O. It functions in the pathway amino-acid biosynthesis; L-tryptophan biosynthesis; L-tryptophan from chorismate: step 4/5. The polypeptide is Indole-3-glycerol phosphate synthase (Bacillus licheniformis (strain ATCC 14580 / DSM 13 / JCM 2505 / CCUG 7422 / NBRC 12200 / NCIMB 9375 / NCTC 10341 / NRRL NRS-1264 / Gibson 46)).